The chain runs to 118 residues: Putative ankyrin repeat protein R747 (118 aa).

One copy of the ANK repeat lies at 70–99; that stretch reads NCYYLLDYAIMKNDIPVIVTLIEKGANINR.

The polypeptide is Putative ankyrin repeat protein R747 (Acanthamoeba polyphaga (Amoeba)).